We begin with the raw amino-acid sequence, 183 residues long: Large ribosomal subunit protein uL5 (183 aa).

It belongs to the universal ribosomal protein uL5 family. As to quaternary structure, part of the 50S ribosomal subunit; part of the 5S rRNA/L5/L18/L25 subcomplex. Contacts the 5S rRNA and the P site tRNA. Forms a bridge to the 30S subunit in the 70S ribosome.

Functionally, this is one of the proteins that bind and probably mediate the attachment of the 5S RNA into the large ribosomal subunit, where it forms part of the central protuberance. In the 70S ribosome it contacts protein S13 of the 30S subunit (bridge B1b), connecting the 2 subunits; this bridge is implicated in subunit movement. Contacts the P site tRNA; the 5S rRNA and some of its associated proteins might help stabilize positioning of ribosome-bound tRNAs. This Legionella pneumophila (strain Lens) protein is Large ribosomal subunit protein uL5.